A 130-amino-acid chain; its full sequence is Cuticle protein 14 isoform b (130 aa).

Residues 24–90 enclose the Chitin-binding type R&amp;R domain; that stretch reads IGNYNFGYNE…NVHTNEPGTD (67 aa).

This is Cuticle protein 14 isoform b from Limulus polyphemus (Atlantic horseshoe crab).